Reading from the N-terminus, the 146-residue chain is Large ribosomal subunit protein uL23m (146 aa).

The disordered stretch occupies residues 108–146 (PDLFPEKEPTSPDPLEEELPQQRQSSDPRCPGIPSWFGL).

It belongs to the universal ribosomal protein uL23 family. Component of the mitochondrial ribosome large subunit (39S) which comprises a 16S rRNA and about 50 distinct proteins.

The protein localises to the mitochondrion. The protein is Large ribosomal subunit protein uL23m (Mrpl23) of Rattus norvegicus (Rat).